The sequence spans 1774 residues: U3 small nucleolar RNA-associated protein 10 (1774 aa).

A disordered region spans residues 1209 to 1228; it reads TEQGKSDGDESGSEPDNDNP. Residues 1734-1772 form an HEAT repeat; it reads LVPVIAELLEDDDEEVEQEVRTGLVKVVETVLGEPFDRY.

The protein belongs to the HEATR1/UTP10 family. As to quaternary structure, component of the ribosomal small subunit (SSU) processome.

It localises to the nucleus. It is found in the nucleolus. Its function is as follows. Involved in nucleolar processing of pre-18S ribosomal RNA. Involved in ribosome biosynthesis. The sequence is that of U3 small nucleolar RNA-associated protein 10 from Eremothecium gossypii (strain ATCC 10895 / CBS 109.51 / FGSC 9923 / NRRL Y-1056) (Yeast).